The chain runs to 359 residues: F-box protein At1g10895 (359 aa).

The F-box domain maps to 2–48 (TTMSDLDEIMVAEILCRTPMTCLKTVRSVCKKWNALSKKWFFFGKAK).

This Arabidopsis thaliana (Mouse-ear cress) protein is F-box protein At1g10895.